A 115-amino-acid chain; its full sequence is MSRVKRGNVARKRRKKVLKLAKGFRGSHSRLFRTANQQVMKALRNAYRDRRKRKRDFRRLWITRINAAARQQGISYSQLTGQLKKANILLNRKMLAQLAVLDPVAFAKVVETAKG.

This sequence belongs to the bacterial ribosomal protein bL20 family.

Functionally, binds directly to 23S ribosomal RNA and is necessary for the in vitro assembly process of the 50S ribosomal subunit. It is not involved in the protein synthesizing functions of that subunit. This Microcystis aeruginosa (strain NIES-843 / IAM M-2473) protein is Large ribosomal subunit protein bL20.